Here is a 62-residue protein sequence, read N- to C-terminus: MDPGECTCMSGGICICGDNCKCTTCNCKTCRKSCCPCCPPGCAKCAQGCICKGGSDKCSCCA.

Residues Cys6, Cys8, Cys14, Cys16, Cys20, Cys22, Cys25, Cys27, Cys30, Cys34, Cys35, Cys37, Cys38, Cys42, Cys45, Cys49, Cys51, Cys58, Cys60, and Cys61 each coordinate a divalent metal cation.

This sequence belongs to the metallothionein superfamily. Type 1 family.

Seems to bind zinc and copper. Could play a special role in regulating zinc metabolism during the differentiation of stratified epithelia. In Canis lupus familiaris (Dog), this protein is Metallothionein-4 (MT4).